Consider the following 249-residue polypeptide: Aspartate/glutamate leucyltransferase (249 aa).

Belongs to the R-transferase family. Bpt subfamily.

It is found in the cytoplasm. The enzyme catalyses N-terminal L-glutamyl-[protein] + L-leucyl-tRNA(Leu) = N-terminal L-leucyl-L-glutamyl-[protein] + tRNA(Leu) + H(+). It carries out the reaction N-terminal L-aspartyl-[protein] + L-leucyl-tRNA(Leu) = N-terminal L-leucyl-L-aspartyl-[protein] + tRNA(Leu) + H(+). Its function is as follows. Functions in the N-end rule pathway of protein degradation where it conjugates Leu from its aminoacyl-tRNA to the N-termini of proteins containing an N-terminal aspartate or glutamate. This chain is Aspartate/glutamate leucyltransferase, found in Brucella melitensis biotype 2 (strain ATCC 23457).